Here is a 56-residue protein sequence, read N- to C-terminus: Large ribosomal subunit protein bL33 (56 aa).

It belongs to the bacterial ribosomal protein bL33 family.

This is Large ribosomal subunit protein bL33 from Treponema denticola (strain ATCC 35405 / DSM 14222 / CIP 103919 / JCM 8153 / KCTC 15104).